The sequence spans 754 residues: uncharacterized protein (754 aa).

Residues 1 to 110 form a disordered region; the sequence is MNKGQNQVVP…RNMLGSLQKT (110 aa). Positions 15-25 are enriched in polar residues; sequence FGGQNPPQLSS. A compositionally biased stretch (low complexity) spans 26–35; it reads IPPIVNPVVV. Over residues 36-46 the composition is skewed to polar residues; it reads QNRTSPGTPFI. Basic and acidic residues predominate over residues 49 to 60; it reads KAKEIYNRRQQE. Over residues 62–72 the composition is skewed to acidic residues; that stretch reads ISSDSEEEESP. Residues 76–93 show a composition bias toward basic and acidic residues; the sequence is AKSKYSRDSRDSRDTRDS.

The protein localises to the virion. This is an uncharacterized protein from Acanthamoeba polyphaga mimivirus (APMV).